We begin with the raw amino-acid sequence, 382 residues long: Succinyl-diaminopimelate desuccinylase (382 aa).

A Zn(2+)-binding site is contributed by His-72. Asp-74 is a catalytic residue. Asp-105 lines the Zn(2+) pocket. Glu-139 (proton acceptor) is an active-site residue. Zn(2+)-binding residues include Glu-140, Glu-168, and His-354.

The protein belongs to the peptidase M20A family. DapE subfamily. As to quaternary structure, homodimer. It depends on Zn(2+) as a cofactor. Co(2+) serves as cofactor.

The enzyme catalyses N-succinyl-(2S,6S)-2,6-diaminopimelate + H2O = (2S,6S)-2,6-diaminopimelate + succinate. It participates in amino-acid biosynthesis; L-lysine biosynthesis via DAP pathway; LL-2,6-diaminopimelate from (S)-tetrahydrodipicolinate (succinylase route): step 3/3. Its function is as follows. Catalyzes the hydrolysis of N-succinyl-L,L-diaminopimelic acid (SDAP), forming succinate and LL-2,6-diaminopimelate (DAP), an intermediate involved in the bacterial biosynthesis of lysine and meso-diaminopimelic acid, an essential component of bacterial cell walls. The protein is Succinyl-diaminopimelate desuccinylase of Shewanella amazonensis (strain ATCC BAA-1098 / SB2B).